Reading from the N-terminus, the 279-residue chain is Polyamine aminopropyltransferase (279 aa).

Residues 4-237 (IEWYPRGYGV…SPWAFLVGIK (234 aa)) enclose the PABS domain. Gln29 lines the S-methyl-5'-thioadenosine pocket. Positions 60 and 84 each coordinate spermidine. S-methyl-5'-thioadenosine-binding positions include Glu104 and 141-142 (DG). Asp158 acts as the Proton acceptor in catalysis. 158–161 (DSTD) provides a ligand contact to spermidine. Pro165 serves as a coordination point for S-methyl-5'-thioadenosine.

This sequence belongs to the spermidine/spermine synthase family. In terms of assembly, homodimer or homotetramer.

The protein resides in the cytoplasm. The catalysed reaction is S-adenosyl 3-(methylsulfanyl)propylamine + putrescine = S-methyl-5'-thioadenosine + spermidine + H(+). It functions in the pathway amine and polyamine biosynthesis; spermidine biosynthesis; spermidine from putrescine: step 1/1. Its function is as follows. Catalyzes the irreversible transfer of a propylamine group from the amino donor S-adenosylmethioninamine (decarboxy-AdoMet) to putrescine (1,4-diaminobutane) to yield spermidine. The sequence is that of Polyamine aminopropyltransferase from Pyrococcus abyssi (strain GE5 / Orsay).